Reading from the N-terminus, the 291-residue chain is tRNA dimethylallyltransferase (291 aa).

9-16 (GPTASGKT) serves as a coordination point for ATP. A substrate-binding site is contributed by 11–16 (TASGKT). Positions 34-37 (DSLQ) are interaction with substrate tRNA.

This sequence belongs to the IPP transferase family. Monomer. The cofactor is Mg(2+).

The catalysed reaction is adenosine(37) in tRNA + dimethylallyl diphosphate = N(6)-dimethylallyladenosine(37) in tRNA + diphosphate. Its function is as follows. Catalyzes the transfer of a dimethylallyl group onto the adenine at position 37 in tRNAs that read codons beginning with uridine, leading to the formation of N6-(dimethylallyl)adenosine (i(6)A). In Onion yellows phytoplasma (strain OY-M), this protein is tRNA dimethylallyltransferase.